Consider the following 820-residue polypeptide: Mediator of RNA polymerase II transcription subunit 16 (820 aa).

WD repeat units follow at residues S74–K114, R621–S665, and S757–C811.

It belongs to the Mediator complex subunit 16 family. As to quaternary structure, component of the Mediator complex.

The protein localises to the nucleus. Its function is as follows. Component of the Mediator complex, a coactivator involved in the regulated transcription of nearly all RNA polymerase II-dependent genes. Mediator functions as a bridge to convey information from gene-specific regulatory proteins to the basal RNA polymerase II transcription machinery. Mediator is recruited to promoters by direct interactions with regulatory proteins and serves as a scaffold for the assembly of a functional preinitiation complex with RNA polymerase II and the general transcription factors. In Aedes aegypti (Yellowfever mosquito), this protein is Mediator of RNA polymerase II transcription subunit 16 (MED16).